The following is a 342-amino-acid chain: Farnesyl pyrophosphate synthase 1 (342 aa).

Isopentenyl diphosphate contacts are provided by K47, R50, and Q86. Positions 93 and 97 each coordinate Mg(2+). Residue R102 coordinates dimethylallyl diphosphate. R103 contacts isopentenyl diphosphate. Residues K190, T191, Q229, K246, and K255 each coordinate dimethylallyl diphosphate.

It belongs to the FPP/GGPP synthase family. Requires Mg(2+) as cofactor.

It is found in the cytoplasm. The catalysed reaction is isopentenyl diphosphate + dimethylallyl diphosphate = (2E)-geranyl diphosphate + diphosphate. It carries out the reaction isopentenyl diphosphate + (2E)-geranyl diphosphate = (2E,6E)-farnesyl diphosphate + diphosphate. It functions in the pathway isoprenoid biosynthesis; farnesyl diphosphate biosynthesis; farnesyl diphosphate from geranyl diphosphate and isopentenyl diphosphate: step 1/1. Its pathway is isoprenoid biosynthesis; geranyl diphosphate biosynthesis; geranyl diphosphate from dimethylallyl diphosphate and isopentenyl diphosphate: step 1/1. Functionally, catalyzes the sequential condensation of isopentenyl pyrophosphate with the allylic pyrophosphates, dimethylallyl pyrophosphate, and then with the resultant geranylpyrophosphate to the ultimate product farnesyl pyrophosphate. This Lupinus albus (White lupine) protein is Farnesyl pyrophosphate synthase 1 (FPS1).